Consider the following 92-residue polypeptide: CRISPR-associated endoribonuclease Cas2 2 (92 aa).

D12 contacts Mg(2+).

Belongs to the CRISPR-associated endoribonuclease Cas2 protein family. As to quaternary structure, homodimer, forms a heterotetramer with a Cas1 homodimer. Mg(2+) is required as a cofactor.

CRISPR (clustered regularly interspaced short palindromic repeat), is an adaptive immune system that provides protection against mobile genetic elements (viruses, transposable elements and conjugative plasmids). CRISPR clusters contain sequences complementary to antecedent mobile elements and target invading nucleic acids. CRISPR clusters are transcribed and processed into CRISPR RNA (crRNA). Functions as a ssRNA-specific endoribonuclease. Involved in the integration of spacer DNA into the CRISPR cassette. The sequence is that of CRISPR-associated endoribonuclease Cas2 2 (cas22) from Archaeoglobus fulgidus (strain ATCC 49558 / DSM 4304 / JCM 9628 / NBRC 100126 / VC-16).